A 435-amino-acid polypeptide reads, in one-letter code: Probable aminotransferase gliI (435 aa).

Lys266 bears the N6-(pyridoxal phosphate)lysine mark.

It belongs to the class-I pyridoxal-phosphate-dependent aminotransferase family. It depends on pyridoxal 5'-phosphate as a cofactor.

Its pathway is mycotoxin biosynthesis. Functionally, probable aminotransferase; part of the gene cluster that mediates the biosynthesis of gliotoxin, a member of the epipolythiodioxopiperazine (ETP) class of toxins characterized by a disulfide bridged cyclic dipeptide. The first step in gliotoxin biosynthesis is the condensation of serine and phenylalanine to form the cyclo-L-phenylalanyl-L-serine diketopiperazine (DKP) by the NRPS gliP. GliP is also able to produce the DKP cyclo-L-tryptophanyl-L-serine, suggesting that the substrate specificity of the first adenylation (A) domain in gliP is sufficiently relaxed to accommodate both L-Phe and L-Trp. The cytochrome P450 monooxygenase gliC has been shown to catalyze the subsequent hydroxylation of the alpha-carbon of L-Phe in cyclo-L-phenylalanyl-L-serine whereas the second cytochrome P450 enzyme, gliF, is presumably involved in the modification of the DKP side chain. The glutathione S-transferase (GST) gliG then forms a bis-glutathionylated biosynthetic intermediate which is responsible for the sulfurization of gliotoxin. This bis-glutathionylated intermediate is subsequently processed by the gamma-glutamyl cyclotransferase gliK to remove both gamma-glutamyl moieties. Subsequent processing via gliI yields a biosynthetic intermediate, which is N-methylated via the N-methyltransferase gliN, before the gliotoxin oxidoreductase gliT-mediated disulfide bridge closure. GliN-mediated amide methylation confers stability to ETP, damping the spontaneous formation of tri- and tetrasulfides. Intracellular dithiol gliotoxin oxidized by gliT is subsequently effluxed by gliA. Gliotoxin contributes to pathogenesis during invasive aspergillosis. In macrophages and neutrophils, gliotoxin showed inhibition of various different cell functions including cytokine production, antigen presentation, phagocytosis, and production of reactive oxygen species. The protein is Probable aminotransferase gliI of Aspergillus fumigatus (strain ATCC MYA-4609 / CBS 101355 / FGSC A1100 / Af293) (Neosartorya fumigata).